Reading from the N-terminus, the 671-residue chain is Anaphase-promoting complex subunit cut9 (671 aa).

The disordered stretch occupies residues 1–24 (MVVKRTQTDSRMQSTPGNHNHPDA). 14 TPR repeats span residues 83 to 114 (REDY…LDIT), 117 to 142 (PNDA…LLTK), 150 to 173 (SACR…LNLL), 198 to 229 (LEAS…ALMV), 234 to 257 (YEAF…LVLK), 268 to 296 (AAFL…DYLS), 306 to 334 (DLLL…ILEI), 341 to 368 (VYPL…LVDR), 373 to 402 (AVTW…SSTM), 407 to 435 (GPAW…TAAR), 442 to 470 (LPYL…SYAL), 475 to 507 (PLLL…LVKK), 513 to 545 (KPWA…GLLL), and 550 to 579 (ANVH…SLAI). Residues 622 to 643 (NLNTSDKSMSMEDQSGKVTESV) are disordered.

In terms of assembly, the APC/C is composed of at least 13 subunits: apc1, apc2, nuc2, apc4, apc5, cut9, apc8, apc10, apc11, hcn1, apc13, apc14 and apc15. Homodimer. Interacts directly with nuc2 and hcn1. Phosphorylated.

It localises to the nucleus. Functionally, component of the anaphase-promoting complex/cyclosome (APC/C), a cell cycle-regulated E3 ubiquitin-protein ligase complex that controls progression through mitosis and the G1 phase of the cell cycle. The APC/C is thought to confer substrate specificity and, in the presence of ubiquitin-conjugating E2 enzymes, it catalyzes the formation of protein-ubiquitin conjugates that are subsequently degraded by the 26S proteasome. May play a pivotal role in the control of anaphase. This Schizosaccharomyces pombe (strain 972 / ATCC 24843) (Fission yeast) protein is Anaphase-promoting complex subunit cut9 (cut9).